A 170-amino-acid polypeptide reads, in one-letter code: Myosin regulatory light chain 2 (170 aa).

Basic residues predominate over residues 1–13 (MSKAAKKKSSKKR). The tract at residues 1–22 (MSKAAKKKSSKKRSGSEAAQFD) is disordered. EF-hand domains are found at residues 24-59 (KTIQEFKEAFGIMDQNKDGIIDKSDLKDLYASMGQI) and 93-128 (DPEATIVGAFAMFDKKDCGKIKEDDLIKILQNKRGE). Ca(2+) contacts are provided by Asp37, Asn39, Asp41, and Asp48.

In terms of assembly, myosin is a hexamer of 2 heavy chains and 4 light chains (two regulatory light chains and two essential light chains).

The chain is Myosin regulatory light chain 2 (mlc-2) from Caenorhabditis elegans.